We begin with the raw amino-acid sequence, 320 residues long: Cytochrome f (320 aa).

Positions 1-35 (MKLNSLINLIQKSIYSCTLLLIILNIICVAPNSSN) are cleaved as a signal peptide. 4 residues coordinate heme: phenylalanine 37, cysteine 57, cysteine 60, and histidine 61. The helical transmembrane segment at 286-306 (IKGMIVFFFASVLAQIFFVLK) threads the bilayer.

The protein belongs to the cytochrome f family. As to quaternary structure, the 4 large subunits of the cytochrome b6-f complex are cytochrome b6, subunit IV (17 kDa polypeptide, petD), cytochrome f and the Rieske protein, while the 4 small subunits are PetG, PetL, PetM and PetN. The complex functions as a dimer. It depends on heme as a cofactor.

Its subcellular location is the plastid. The protein resides in the chloroplast thylakoid membrane. Functionally, component of the cytochrome b6-f complex, which mediates electron transfer between photosystem II (PSII) and photosystem I (PSI), cyclic electron flow around PSI, and state transitions. This Pyropia yezoensis (Susabi-nori) protein is Cytochrome f.